The primary structure comprises 435 residues: GTPase Der (435 aa).

EngA-type G domains are found at residues 2-167 (ATVV…RESG) and 178-351 (PKIA…ESYC). GTP is bound by residues 8–15 (GRANVGKS), 55–59 (DTCGV), 118–121 (NKSE), 184–191 (GKPNVGKS), 231–235 (DTAGM), and 297–300 (NKFD). The KH-like domain occupies 352 to 435 (RKVPQQLLSK…PLVIEFKSRR (84 aa)).

Belongs to the TRAFAC class TrmE-Era-EngA-EngB-Septin-like GTPase superfamily. EngA (Der) GTPase family. As to quaternary structure, associates with the 50S ribosomal subunit.

In terms of biological role, GTPase that plays an essential role in the late steps of ribosome biogenesis. In Pseudothermotoga lettingae (strain ATCC BAA-301 / DSM 14385 / NBRC 107922 / TMO) (Thermotoga lettingae), this protein is GTPase Der.